The primary structure comprises 610 residues: UvrABC system protein C (610 aa).

The GIY-YIG domain maps to Ser-16–Val-94. A UVR domain is found at Asp-204–Val-239.

The protein belongs to the UvrC family. In terms of assembly, interacts with UvrB in an incision complex.

It localises to the cytoplasm. The UvrABC repair system catalyzes the recognition and processing of DNA lesions. UvrC both incises the 5' and 3' sides of the lesion. The N-terminal half is responsible for the 3' incision and the C-terminal half is responsible for the 5' incision. The sequence is that of UvrABC system protein C from Cronobacter sakazakii (strain ATCC BAA-894) (Enterobacter sakazakii).